The following is a 710-amino-acid chain: Phosphoribosylformylglycinamidine synthase subunit PurL (710 aa).

The active site involves histidine 36. ATP is bound by residues tyrosine 39 and lysine 80. Glutamate 82 contributes to the Mg(2+) binding site. Substrate contacts are provided by residues 83–86 (SHNH) and arginine 105. Histidine 84 serves as the catalytic Proton acceptor. Aspartate 106 provides a ligand contact to Mg(2+). Glutamine 226 is a substrate binding site. Residue aspartate 252 participates in Mg(2+) binding. Residue 294–296 (ETQ) participates in substrate binding. Positions 470 and 507 each coordinate ATP. Residue serine 510 participates in substrate binding.

Belongs to the FGAMS family. Monomer. Part of the FGAM synthase complex composed of 1 PurL, 1 PurQ and 2 PurS subunits.

The protein resides in the cytoplasm. It carries out the reaction N(2)-formyl-N(1)-(5-phospho-beta-D-ribosyl)glycinamide + L-glutamine + ATP + H2O = 2-formamido-N(1)-(5-O-phospho-beta-D-ribosyl)acetamidine + L-glutamate + ADP + phosphate + H(+). It functions in the pathway purine metabolism; IMP biosynthesis via de novo pathway; 5-amino-1-(5-phospho-D-ribosyl)imidazole from N(2)-formyl-N(1)-(5-phospho-D-ribosyl)glycinamide: step 1/2. Part of the phosphoribosylformylglycinamidine synthase complex involved in the purines biosynthetic pathway. Catalyzes the ATP-dependent conversion of formylglycinamide ribonucleotide (FGAR) and glutamine to yield formylglycinamidine ribonucleotide (FGAM) and glutamate. The FGAM synthase complex is composed of three subunits. PurQ produces an ammonia molecule by converting glutamine to glutamate. PurL transfers the ammonia molecule to FGAR to form FGAM in an ATP-dependent manner. PurS interacts with PurQ and PurL and is thought to assist in the transfer of the ammonia molecule from PurQ to PurL. This is Phosphoribosylformylglycinamidine synthase subunit PurL from Sulfolobus acidocaldarius (strain ATCC 33909 / DSM 639 / JCM 8929 / NBRC 15157 / NCIMB 11770).